The chain runs to 340 residues: Short-chain dehydrogenase/reductase prx1 (340 aa).

NADP(+) is bound by residues Ile-60, Lys-84, Asp-104, Asn-131, and Lys-162. Residue Ser-184 is the Proton donor of the active site. NADP(+)-binding residues include Tyr-210 and Lys-214. The Proton acceptor role is filled by Tyr-210. Lys-214 acts as the Lowers pKa of active site Tyr in catalysis.

It belongs to the short-chain dehydrogenases/reductases (SDR) family.

It participates in sesquiterpene biosynthesis. In terms of biological role, short-chain dehydrogenase/reductase; part of the gene cluster that mediates the biosynthesis of PR-toxin, a bicyclic sesquiterpene belonging to the eremophilane class and acting as a mycotoxin. The first step of the pathway is catalyzed by the aristolochene synthase which performs the cyclization of trans,trans-farnesyl diphosphate (FPP) to the bicyclic sesquiterpene aristolochene. Following the formation of aristolochene, the non-oxygenated aristolochene is converted to the trioxygenated intermediate eremofortin B, via 7-epi-neopetasone. This conversion appears to involve three enzymes, a hydroxysterol oxidase-like enzyme, the quinone-oxidase prx3 that forms the quinone-type-structure in the bicyclic nucleus of aristolochene with the C8-oxo group and the C-3 hydroxyl group, and the P450 monooxygenase prx9 that introduces the epoxide at the double bond between carbons 1 and 2. No monoxy or dioxy-intermediates have been reported to be released to the broth, so these three early oxidative reactions may be coupled together. Eremofortin B is further oxidized by another P450 monooxygenase, that introduces a second epoxide between carbons 7 and 11 prior to acetylation to eremofortin A by the acetyltransferase prx11. The second epoxidation may be performed by a second P450 monooxygenase. After the acetylation step, eremofortin A is converted to eremofortin C and then to PR-toxin. First the conversion of eremofortin A to eremofortin C proceeds by oxidation of the side chain of the molecule at C-12 and is catalyzed by the short-chain oxidoreductase prx1. The cytochrome P450 monooxygenase prx8 also plays a role in this step. The primary alcohol formed at C-12 is finally oxidized by the short-chain alcohol dehydrogenase prx4 that forms PR-toxin. The sequence is that of Short-chain dehydrogenase/reductase prx1 from Penicillium rubens (strain ATCC 28089 / DSM 1075 / NRRL 1951 / Wisconsin 54-1255) (Penicillium chrysogenum).